A 50-amino-acid chain; its full sequence is Large ribosomal subunit protein bL33B (50 aa).

Belongs to the bacterial ribosomal protein bL33 family.

The protein is Large ribosomal subunit protein bL33B of Streptococcus agalactiae serotype V (strain ATCC BAA-611 / 2603 V/R).